We begin with the raw amino-acid sequence, 339 residues long: Acyl-CoA dehydrogenase FadE28 (339 aa).

Positions 227, 238, 295, and 299 each coordinate FAD.

It belongs to the acyl-CoA dehydrogenase family. As to quaternary structure, heterotetramer composed of FadE28 and FadE29. It depends on FAD as a cofactor.

The enzyme catalyses 3-oxochol-4-en-22-oyl-CoA + A = 3-oxochola-4,17-dien-22-oyl-CoA + AH2. It participates in steroid metabolism; cholesterol degradation. Functionally, involved in the third cycle of side chain dehydrogenation in the beta-oxidation of cholesterol catabolism. May play an important role for the initial macrophage invasion, possibly in response to the acidification of phagosome. It contributes partly to the virulence by increasing the efficiency of beta-oxidation. Catalyzes the dehydrogenation of 2'-propanoyl-CoA ester side chains of 3-oxo-4-pregnene-20-carboxyl-CoA (3-OPC-CoA) to yield 3-oxo-4,17-pregnadiene-20-carboxyl-CoA (3-OPDC-CoA). Also able to dehydrogenate steroyl-CoA such as 3-oxo-chol-4-en-24-oyl-CoA (3-OCO-CoA), 1beta-(2'-propanoyl-CoA)-3a-alpha-H-7a-beta-methylhexahydro-4-indanone (indanone-CoA ester), hexahydroindanone and pregenenone. This Mycobacterium tuberculosis (strain ATCC 25618 / H37Rv) protein is Acyl-CoA dehydrogenase FadE28 (fadE28).